A 402-amino-acid polypeptide reads, in one-letter code: MIIHPKVRGFICTTTHPLGCERNVLDQIAATRARGVRNDGPKKVLVIGASSGYGLASRITAAFGFGADTLGVFFEKPGSDKKAGTAGWYNSAAFDTHAKAAGLYSKSINGDAFSDEARAKVIELIKTDMGGQVDLVVYSLASPVRKLPSTGEVKRSALKPIGNTYTATAIDTNKDTIIQASIEPATEQEIEDTITVMGGQDWELWIDALDSAGVLAKGARSVAFSYIGTEITWPIYWHGALGKAKVDLDHTAQRLDARLQASGGGANVAVLKSVVTQASAAIPVMPLYISMVYKIMKEKGLHEGTIEQLDRLFRERLYREDGQPAEVDEQNRLRLDDWELRDDVQDACKALWPQVTTENLFALTDYAGYKHEFLKLFGFERKDVDYDADVDPDVKFDCIELG.

Residues 48–53 (GASSGY), 74–75 (FE), 111–112 (DA), and 140–141 (LA) contribute to the NAD(+) site. Tyr-226 lines the substrate pocket. Catalysis depends on Tyr-236, which acts as the Proton donor. Residues Lys-245 and 274–276 (VVT) contribute to the NAD(+) site.

The protein belongs to the TER reductase family. As to quaternary structure, monomer.

It catalyses the reaction a 2,3-saturated acyl-[ACP] + NAD(+) = a (2E)-enoyl-[ACP] + NADH + H(+). Its pathway is lipid metabolism; fatty acid biosynthesis. Functionally, involved in the final reduction of the elongation cycle of fatty acid synthesis (FAS II). Catalyzes the reduction of a carbon-carbon double bond in an enoyl moiety that is covalently linked to an acyl carrier protein (ACP). This Xanthomonas campestris pv. campestris (strain 8004) protein is Enoyl-[acyl-carrier-protein] reductase [NADH].